The following is a 173-amino-acid chain: Crossover junction endodeoxyribonuclease RuvC (173 aa).

Catalysis depends on residues Asp-8, Glu-67, and Asp-139. Mg(2+) contacts are provided by Asp-8, Glu-67, and Asp-139.

Belongs to the RuvC family. Homodimer which binds Holliday junction (HJ) DNA. The HJ becomes 2-fold symmetrical on binding to RuvC with unstacked arms; it has a different conformation from HJ DNA in complex with RuvA. In the full resolvosome a probable DNA-RuvA(4)-RuvB(12)-RuvC(2) complex forms which resolves the HJ. The cofactor is Mg(2+).

Its subcellular location is the cytoplasm. The enzyme catalyses Endonucleolytic cleavage at a junction such as a reciprocal single-stranded crossover between two homologous DNA duplexes (Holliday junction).. Its function is as follows. The RuvA-RuvB-RuvC complex processes Holliday junction (HJ) DNA during genetic recombination and DNA repair. Endonuclease that resolves HJ intermediates. Cleaves cruciform DNA by making single-stranded nicks across the HJ at symmetrical positions within the homologous arms, yielding a 5'-phosphate and a 3'-hydroxyl group; requires a central core of homology in the junction. The consensus cleavage sequence is 5'-(A/T)TT(C/G)-3'. Cleavage occurs on the 3'-side of the TT dinucleotide at the point of strand exchange. HJ branch migration catalyzed by RuvA-RuvB allows RuvC to scan DNA until it finds its consensus sequence, where it cleaves and resolves the cruciform DNA. This Shewanella putrefaciens (strain CN-32 / ATCC BAA-453) protein is Crossover junction endodeoxyribonuclease RuvC.